Consider the following 485-residue polypeptide: NADH-quinone oxidoreductase subunit N (485 aa).

A run of 14 helical transmembrane segments spans residues 8 to 28, 35 to 55, 75 to 95, 105 to 125, 127 to 147, 159 to 179, 203 to 223, 235 to 255, 271 to 291, 297 to 317, 326 to 346, 373 to 393, 408 to 427, and 449 to 469; these read LIAL…MLSI, FVNA…LYFV, FYTG…YPWL, FYLL…ASHL, SLFI…GYAF, YTIL…LVYA, LLAG…LVPF, PAPV…GVLM, TVLG…AISQ, LLGY…IAVQ, VGVY…VVSL, AAVM…LGFI, WWLT…YYLR, and AFTA…VLGI.

Belongs to the complex I subunit 2 family. NDH-1 is composed of 13 different subunits. Subunits NuoA, H, J, K, L, M, N constitute the membrane sector of the complex.

It is found in the cell inner membrane. The enzyme catalyses a quinone + NADH + 5 H(+)(in) = a quinol + NAD(+) + 4 H(+)(out). In terms of biological role, NDH-1 shuttles electrons from NADH, via FMN and iron-sulfur (Fe-S) centers, to quinones in the respiratory chain. The immediate electron acceptor for the enzyme in this species is believed to be ubiquinone. Couples the redox reaction to proton translocation (for every two electrons transferred, four hydrogen ions are translocated across the cytoplasmic membrane), and thus conserves the redox energy in a proton gradient. The polypeptide is NADH-quinone oxidoreductase subunit N (Erwinia tasmaniensis (strain DSM 17950 / CFBP 7177 / CIP 109463 / NCPPB 4357 / Et1/99)).